The primary structure comprises 288 residues: ATP synthase gamma chain (288 aa).

Belongs to the ATPase gamma chain family. In terms of assembly, F-type ATPases have 2 components, CF(1) - the catalytic core - and CF(0) - the membrane proton channel. CF(1) has five subunits: alpha(3), beta(3), gamma(1), delta(1), epsilon(1). CF(0) has three main subunits: a, b and c.

The protein localises to the cell inner membrane. Its function is as follows. Produces ATP from ADP in the presence of a proton gradient across the membrane. The gamma chain is believed to be important in regulating ATPase activity and the flow of protons through the CF(0) complex. This is ATP synthase gamma chain from Polaromonas naphthalenivorans (strain CJ2).